A 278-amino-acid chain; its full sequence is uncharacterized protein (278 aa).

Residues 251 to 278 form a disordered region; the sequence is TLSENKKQKSSSTSPETDSDMSEFFGDN.

This is an uncharacterized protein from Aedes pseudoscutellaris reovirus (isolate France) (ApRV).